A 129-amino-acid polypeptide reads, in one-letter code: MSRKESRVQAFQTLFQLEMKDSDLTINEAISFIKDDNPDLDFEFIHWLVSGVKGHEPVLDETISPYLKDWTIARLLKTDRIILRMATYEILHSDTPAKVVMNEAVELTKQFSDDDHYKFINGVLSNIKK.

This sequence belongs to the NusB family.

In terms of biological role, involved in transcription antitermination. Required for transcription of ribosomal RNA (rRNA) genes. Binds specifically to the boxA antiterminator sequence of the ribosomal RNA (rrn) operons. This is Transcription antitermination protein NusB from Staphylococcus aureus (strain USA300 / TCH1516).